The sequence spans 206 residues: Probable thymidylate kinase (206 aa).

Residue 7–14 (GIDGSGKS) participates in ATP binding.

It belongs to the thymidylate kinase family.

The enzyme catalyses dTMP + ATP = dTDP + ADP. The chain is Probable thymidylate kinase from Methanospirillum hungatei JF-1 (strain ATCC 27890 / DSM 864 / NBRC 100397 / JF-1).